The chain runs to 244 residues: 1-(5-phosphoribosyl)-5-[(5-phosphoribosylamino)methylideneamino] imidazole-4-carboxamide isomerase (244 aa).

D10 functions as the Proton acceptor in the catalytic mechanism. Catalysis depends on D132, which acts as the Proton donor.

It belongs to the HisA/HisF family.

The protein localises to the cytoplasm. The catalysed reaction is 1-(5-phospho-beta-D-ribosyl)-5-[(5-phospho-beta-D-ribosylamino)methylideneamino]imidazole-4-carboxamide = 5-[(5-phospho-1-deoxy-D-ribulos-1-ylimino)methylamino]-1-(5-phospho-beta-D-ribosyl)imidazole-4-carboxamide. The protein operates within amino-acid biosynthesis; L-histidine biosynthesis; L-histidine from 5-phospho-alpha-D-ribose 1-diphosphate: step 4/9. This Xanthomonas axonopodis pv. citri (strain 306) protein is 1-(5-phosphoribosyl)-5-[(5-phosphoribosylamino)methylideneamino] imidazole-4-carboxamide isomerase.